The following is a 37-amino-acid chain: Large ribosomal subunit protein bL36 (37 aa).

This sequence belongs to the bacterial ribosomal protein bL36 family.

This Synechococcus sp. (strain RCC307) protein is Large ribosomal subunit protein bL36.